The primary structure comprises 443 residues: Tol-Pal system protein TolB (443 aa).

An N-terminal signal peptide occupies residues 1–18 (MRNIVYFILTLFSLTSYA).

This sequence belongs to the TolB family. As to quaternary structure, the Tol-Pal system is composed of five core proteins: the inner membrane proteins TolA, TolQ and TolR, the periplasmic protein TolB and the outer membrane protein Pal. They form a network linking the inner and outer membranes and the peptidoglycan layer.

Its subcellular location is the periplasm. Functionally, part of the Tol-Pal system, which plays a role in outer membrane invagination during cell division and is important for maintaining outer membrane integrity. This is Tol-Pal system protein TolB from Rickettsia prowazekii (strain Madrid E).